Reading from the N-terminus, the 883-residue chain is Sodium/sulfate cotransporter 2 (883 aa).

The next 6 membrane-spanning stretches (helical) occupy residues 3–23 (FGWQGSVSIAFTALAFVVMAA), 30–50 (VTFTVLLAFLTAFDGQIVTVA), 60–80 (GLLTVIFLYWVAEGITQTGGL), 106–126 (MCLSAFLNNTPCVTFMIPILI), 139–159 (LLIPLSYASVLGGTCTSIGTS), and 185–205 (IFDIAPYGVPYALWGFVFILL). 4 RCK C-terminal domains span residues 211 to 295 (LPGN…EFGL), 317 to 401 (VFTP…SKNN), 406 to 491 (VRAV…FPGL), and 497 to 583 (EQVD…DKSF). 6 consecutive transmembrane segments (helical) span residues 600–620 (MVIGVLLATGMVLTQIVGGLK), 624–644 (YIHLWPAAVLTSALMLLTGCM), 657–677 (VYLTIAAAFGVSAALEGTGVA), 693–713 (SDGAALIAIYIATAMLSELLT), 774–794 (FAIIGAPFQIWLMIVAGFILC), and 802–822 (VWIVSWICTAGIVLLPALYFL). The disordered stretch occupies residues 857–883 (QASRTGSDGTGSSDSPRALGVPKVITA). Low complexity predominate over residues 861–871 (TGSDGTGSSDS).

Belongs to the divalent anion:Na+ symporter (DASS) superfamily. Na+/sulfate symporter (TC 2.A.47.4) family.

The protein localises to the cell membrane. Functionally, na(+)/sulfate cotransporter with a probable high-affinity for sulfate and a proteasome dependent turnover. The polypeptide is Sodium/sulfate cotransporter 2 (SLT2) (Chlamydomonas reinhardtii (Chlamydomonas smithii)).